Here is a 91-residue protein sequence, read N- to C-terminus: Early E3B 10.4 kDa protein (91 aa).

The first 22 residues, 1–22, serve as a signal peptide directing secretion; the sequence is MIPRVLILLTLVALFCACSTLA. The Lumenal portion of the chain corresponds to 23 to 34; the sequence is AVAHIEVDCIPP. A helical transmembrane segment spans residues 35–60; it reads FTVYLLYGFVTLILICSLVTVVIAFI. Over 61–91 the chain is Cytoplasmic; that stretch reads QFIDWICVRIAYLRHHPQYRDRTIADLLRIL.

Belongs to the adenoviridae E3B family.

The protein localises to the host endoplasmic reticulum membrane. Functionally, down-regulates the EGF receptor. This chain is Early E3B 10.4 kDa protein, found in Homo sapiens (Human).